A 285-amino-acid chain; its full sequence is Non-structural protein ORF4b (285 aa).

It is found in the host nucleus. The protein resides in the host nucleolus. It localises to the host cytoplasm. In terms of biological role, plays a role in the inhibition of host innate immunity by inhibiting the interaction between host IKBKE and MAVS. In turn, this inhibition prevents the production of host interferon beta. Additionally, may also interfere with host antiviral response within the nucleus. This chain is Non-structural protein ORF4b (ORF4b), found in Tylonycteris pachypus (Lesser bamboo bat).